A 427-amino-acid chain; its full sequence is UDP-N-acetyl-D-mannosamine dehydrogenase (427 aa).

NAD(+) contacts are provided by Tyr20, Ile21, Asp40, Arg45, Thr92, and Thr130. Arg157, Val158, Lys209, Asn213, Arg216, His247, Arg249, and Gly260 together coordinate UDP-N-acetyl-alpha-D-mannosaminouronate. Lys209 serves as the catalytic Proton donor/acceptor. The active-site Nucleophile is the Cys263. Positions 317 and 318 each coordinate UDP-N-acetyl-alpha-D-mannosaminouronate. Arg325 is an NAD(+) binding site. Lys403 serves as a coordination point for UDP-N-acetyl-alpha-D-mannosaminouronate.

It belongs to the UDP-glucose/GDP-mannose dehydrogenase family. Homotetramer; probably dimer of dimers.

The catalysed reaction is UDP-N-acetyl-alpha-D-mannosamine + 2 NAD(+) + H2O = UDP-N-acetyl-alpha-D-mannosaminouronate + 2 NADH + 3 H(+). Functionally, catalyzes the four-electron oxidation of UDP-N-acetyl-D-mannosamine (UDP-ManNAc), reducing NAD(+) and releasing UDP-N-acetylmannosaminuronic acid (UDP-ManNAcA). The chain is UDP-N-acetyl-D-mannosamine dehydrogenase (wecC) from Methanocaldococcus jannaschii (strain ATCC 43067 / DSM 2661 / JAL-1 / JCM 10045 / NBRC 100440) (Methanococcus jannaschii).